The primary structure comprises 385 residues: Telomere-binding protein subunit beta (385 aa).

2 disordered regions span residues alanine 231–threonine 329 and tryptophan 343–lysine 385. Over residues glycine 242–alanine 262 the composition is skewed to basic residues. Over residues lysine 263–valine 280 the composition is skewed to basic and acidic residues. 3 stretches are compositionally biased toward low complexity: residues lysine 295–serine 304, lysine 312–alanine 326, and glycine 365–serine 375. Residues lysine 376–lysine 385 show a composition bias toward basic residues.

As to quaternary structure, heterodimer of an alpha and a beta subunit.

The protein resides in the nucleus. Its subcellular location is the chromosome. It is found in the telomere. Its function is as follows. May function as protective capping of the single-stranded telomeric overhang. May also participate in telomere length regulation during DNA replication. Binds specifically to the T4G4-containing extension on the 3'strand and protects this region of the telomere from nuclease digestion and chemical modification. In Sterkiella nova (Ciliate), this protein is Telomere-binding protein subunit beta (MAC-41A).